The following is a 216-amino-acid chain: Peptide methionine sulfoxide reductase MsrA (216 aa).

C54 is a catalytic residue.

Belongs to the MsrA Met sulfoxide reductase family.

The catalysed reaction is L-methionyl-[protein] + [thioredoxin]-disulfide + H2O = L-methionyl-(S)-S-oxide-[protein] + [thioredoxin]-dithiol. It catalyses the reaction [thioredoxin]-disulfide + L-methionine + H2O = L-methionine (S)-S-oxide + [thioredoxin]-dithiol. In terms of biological role, has an important function as a repair enzyme for proteins that have been inactivated by oxidation. Catalyzes the reversible oxidation-reduction of methionine sulfoxide in proteins to methionine. This is Peptide methionine sulfoxide reductase MsrA from Xylella fastidiosa (strain Temecula1 / ATCC 700964).